Reading from the N-terminus, the 206-residue chain is Small ribosomal subunit protein uS4 (206 aa).

Residues 96–156 (TRLDNVVYRM…EKSRTQARIK (61 aa)) enclose the S4 RNA-binding domain.

Belongs to the universal ribosomal protein uS4 family. Part of the 30S ribosomal subunit. Contacts protein S5. The interaction surface between S4 and S5 is involved in control of translational fidelity.

In terms of biological role, one of the primary rRNA binding proteins, it binds directly to 16S rRNA where it nucleates assembly of the body of the 30S subunit. With S5 and S12 plays an important role in translational accuracy. This Shewanella amazonensis (strain ATCC BAA-1098 / SB2B) protein is Small ribosomal subunit protein uS4.